Consider the following 201-residue polypeptide: Interferon-induced transmembrane protein 10 (201 aa).

Disordered stretches follow at residues 1–23 (MAQGPSQCPALLGAPASTTDGTQ) and 60–88 (AAPAPEPSASPPMAPTLFPMESKSSKTDS). At 1–127 (MAQGPSQCPA…PDTTEVNDYY (127 aa)) the chain is on the extracellular side. The span at 63-73 (APEPSASPPMA) shows a compositional bias: pro residues. The helical transmembrane segment at 128-148 (LWSIFNFVYLNFCCLGFIALA) threads the bilayer. 2 S-palmitoyl cysteine lipidation sites follow: cysteine 140 and cysteine 141. Residues 149–173 (YSLKVRDKKLLNDLNGAVEDAKTAR) lie on the Cytoplasmic side of the membrane. The chain crosses the membrane as a helical span at residues 174–194 (LFNITSSALAASCIILIFIFL). Residues 195-201 (RYPLTDY) are Extracellular-facing.

This sequence belongs to the CD225/Dispanin family.

The protein resides in the cell membrane. This is Interferon-induced transmembrane protein 10 (Ifitm10) from Mus musculus (Mouse).